The following is a 601-amino-acid chain: Serine/threonine-protein phosphatase 2A 65 kDa regulatory subunit A beta isoform (601 aa).

A2 bears the N-acetylalanine mark. HEAT repeat units follow at residues 20–58 (DSLYPIAVLIDELRNEDVQLRLNSIKKLSTIALALGVER), 59–96 (TRTELLPFLTDTIYDEDEVLLALAEQLGNFTGLVGGPD), 97–135 (FAHCLLPPLESLATVEETVVRDKAVESLRQISQEHTPVA), 136–173 (LEAHFVPLVKRLASGDWFTSRTSACGLFSVCYPRASNA), 174–212 (VKAEIRQHFRSLCSDDTPMVRRAAASKLGEFAKVLELDS), 213–251 (VKTEIVPLFTNLASDEQDSVRLLAVEACVSIAQLLSQDD), 252–290 (LEALVMPTLRQAAEDKSWRVRYMVADKFSELQKAVGPKI), 291–333 (ALSD…RETV), 334–372 (IMNQILPYIKELVSDTNQHVKSALASVIMGLSTVLGKEN), 373–411 (TIEHLLPLFLAQLKDECPEVRLNIISNLDCVNEVIGIRQ), 412–450 (LSQSLLPAIVELAEDAKWRVRLAIIEYMPLLAGQLGVEF), 451–489 (FDEKLNSLCMAWLVDHVYAIREAATNNLMKLVQKFGTEW), 490–528 (AQNTIVPKVLVMANDPNYLHRMTTLFCINALSEACGKEI), 529–567 (TTKQMLPIVLKMAGDQVANVRFNVAKSLQKIGPILDTNA), and 568–601 (LQGEVKPVLQKLGQDEDMDVKYFAQEAISVLALA).

This sequence belongs to the phosphatase 2A regulatory subunit A family. In terms of assembly, PP2A consists of a common heterodimeric core enzyme, composed of a 36 kDa catalytic subunit (subunit C) and a 65 kDa constant regulatory subunit (PR65 or subunit A), that associates with a variety of regulatory subunits. Proteins that associate with the core dimer include three families of regulatory subunits B (the R2/B/PR55/B55, R3/B''/PR72/PR130/PR59 and R5/B'/B56 families), the 48 kDa variable regulatory subunit, viral proteins, and cell signaling molecules. Interacts with IPO9. Interacts with SGO1. Interacts with RAF1.

Functionally, the PR65 subunit of protein phosphatase 2A serves as a scaffolding molecule to coordinate the assembly of the catalytic subunit and a variable regulatory B subunit. This chain is Serine/threonine-protein phosphatase 2A 65 kDa regulatory subunit A beta isoform (Ppp2r1b), found in Rattus norvegicus (Rat).